The sequence spans 451 residues: UDP-N-acetylmuramoylalanine--D-glutamate ligase (451 aa).

119–125 (GSNGKTT) is an ATP binding site.

Belongs to the MurCDEF family.

It is found in the cytoplasm. The enzyme catalyses UDP-N-acetyl-alpha-D-muramoyl-L-alanine + D-glutamate + ATP = UDP-N-acetyl-alpha-D-muramoyl-L-alanyl-D-glutamate + ADP + phosphate + H(+). Its pathway is cell wall biogenesis; peptidoglycan biosynthesis. Cell wall formation. Catalyzes the addition of glutamate to the nucleotide precursor UDP-N-acetylmuramoyl-L-alanine (UMA). The chain is UDP-N-acetylmuramoylalanine--D-glutamate ligase from Geobacillus kaustophilus (strain HTA426).